We begin with the raw amino-acid sequence, 207 residues long: Acyl-homoserine-lactone synthase (207 aa).

This sequence belongs to the autoinducer synthase family.

It carries out the reaction a fatty acyl-[ACP] + S-adenosyl-L-methionine = an N-acyl-L-homoserine lactone + S-methyl-5'-thioadenosine + holo-[ACP] + H(+). Required for the synthesis of N-butanoyl-L-homoserine lactone (BHL), an autoinducer molecule which binds to AhyR. The protein is Acyl-homoserine-lactone synthase (ahyI) of Aeromonas hydrophila.